Reading from the N-terminus, the 330-residue chain is Membrane-associated protein VIPP1, chloroplastic (330 aa).

Residues Met-1–Arg-64 constitute a chloroplast transit peptide. Coiled coils occupy residues Ser-124–Ile-259 and Lys-312–Asp-329. Positions Leu-287–Lys-312 are disordered.

It belongs to the PspA/Vipp/IM30 family. As to quaternary structure, homomultimer. Complex formation involves interaction via the central alpha-helical domain (71-286).

It localises to the plastid. The protein resides in the chloroplast inner membrane. The protein localises to the chloroplast thylakoid membrane. Its function is as follows. Required for plastid vesicle formation and thylakoid membrane biogenesis, but not for functional assembly of thylakoid protein complexes. This is Membrane-associated protein VIPP1, chloroplastic from Arabidopsis thaliana (Mouse-ear cress).